Reading from the N-terminus, the 170-residue chain is Calcineurin subunit B type 1 (170 aa).

Residue glycine 2 is the site of N-myristoyl glycine attachment. EF-hand domains are found at residues aspartate 18–leucine 46, glutamine 50–lysine 85, aspartate 87–asparagine 122, and glutamine 128–histidine 163. Ca(2+) contacts are provided by aspartate 31, aspartate 33, serine 35, serine 37, glutamate 42, aspartate 63, aspartate 65, asparagine 67, glutamate 69, glutamate 74, aspartate 100, aspartate 102, aspartate 104, tyrosine 106, and glutamate 111. The residue at position 106 (tyrosine 106) is a Phosphotyrosine. Residues glutamine 131 to threonine 136 are calcineurin A binding. Ca(2+) contacts are provided by aspartate 141, aspartate 143, aspartate 145, arginine 147, and glutamate 152.

It belongs to the calcineurin regulatory subunit family. As to quaternary structure, forms a complex composed of a calmodulin-dependent catalytic subunit (also known as calcineurin A) and a regulatory Ca(2+)-binding subunit (also known as calcineurin B). There are three catalytic subunits, each encoded by a separate gene (PPP3CA, PPP3CB, and PPP3CC) and two regulatory subunits which are also encoded by separate genes (PPP3R1 and PPP3R2). The interaction between the 2 subunits is Ca(2+)-independent. Interacts with catalytic subunit PPP3CA/calcineurin A. Interacts with catalytic subunit PPP3CB/calcineurin A. Interacts with CIB1 (via C-terminal region); the interaction increases upon cardiomyocyte hypertrophy. Interacts with RCAN1. Interacts with SPATA33 (via PQIIIT motif).

It is found in the cytoplasm. The protein resides in the cytosol. Its subcellular location is the cell membrane. The protein localises to the sarcolemma. Its function is as follows. Regulatory subunit of calcineurin, a calcium-dependent, calmodulin stimulated protein phosphatase. Confers calcium sensitivity. The sequence is that of Calcineurin subunit B type 1 (PPP3R1) from Bos taurus (Bovine).